A 235-amino-acid chain; its full sequence is Carboxy-S-adenosyl-L-methionine synthase (235 aa).

Residues Tyr-35, 60 to 62, 83 to 84, Asn-124, and Arg-191 contribute to the S-adenosyl-L-methionine site; these read GCS and DN.

This sequence belongs to the class I-like SAM-binding methyltransferase superfamily. Cx-SAM synthase family. As to quaternary structure, homodimer.

It carries out the reaction prephenate + S-adenosyl-L-methionine = carboxy-S-adenosyl-L-methionine + 3-phenylpyruvate + H2O. Its function is as follows. Catalyzes the conversion of S-adenosyl-L-methionine (SAM) to carboxy-S-adenosyl-L-methionine (Cx-SAM). The chain is Carboxy-S-adenosyl-L-methionine synthase from Campylobacter jejuni subsp. jejuni serotype O:6 (strain 81116 / NCTC 11828).